Consider the following 257-residue polypeptide: RING-H2 finger protein ATL5 (257 aa).

A helical membrane pass occupies residues 28 to 48 (IMLASVIILFVAVILILCFHS). The RING-type; atypical zinc-finger motif lies at 113–155 (CSVCLSEFEEDDEGRVLPKCGHVFHVDCIDTWFRSRSSCPLCR). The interval 181–209 (EDTEAGSSSSSDESESSTPSSSSGSPVRF) is disordered. Low complexity predominate over residues 185-206 (AGSSSSSDESESSTPSSSSGSP).

The protein belongs to the RING-type zinc finger family. ATL subfamily.

Its subcellular location is the membrane. It catalyses the reaction S-ubiquitinyl-[E2 ubiquitin-conjugating enzyme]-L-cysteine + [acceptor protein]-L-lysine = [E2 ubiquitin-conjugating enzyme]-L-cysteine + N(6)-ubiquitinyl-[acceptor protein]-L-lysine.. Its pathway is protein modification; protein ubiquitination. The polypeptide is RING-H2 finger protein ATL5 (ATL5) (Arabidopsis thaliana (Mouse-ear cress)).